The sequence spans 365 residues: Undecaprenyl-phosphate alpha-N-acetylglucosaminyl 1-phosphate transferase (365 aa).

10 helical membrane-spanning segments follow: residues 3-23 (LLTM…FLFV), 45-65 (GLIP…AFLI), 99-119 (IRAF…GLYL), 132-152 (VLGP…INAF), 157-177 (GIDG…GILL), 187-207 (LWCF…LGLL), 213-233 (VFMG…ILLQ), 242-262 (INPV…IAIM), 293-313 (QAFV…VIGE), and 315-335 (LTFI…LLYG).

The protein belongs to the glycosyltransferase 4 family. WecA subfamily. Mg(2+) is required as a cofactor. It depends on Mn(2+) as a cofactor.

Its subcellular location is the cell inner membrane. The enzyme catalyses di-trans,octa-cis-undecaprenyl phosphate + UDP-N-acetyl-alpha-D-glucosamine = N-acetyl-alpha-D-glucosaminyl-di-trans,octa-cis-undecaprenyl diphosphate + UMP. It functions in the pathway bacterial outer membrane biogenesis; LPS O-antigen biosynthesis. Its pathway is bacterial outer membrane biogenesis; enterobacterial common antigen biosynthesis. Its function is as follows. Catalyzes the transfer of the GlcNAc-1-phosphate moiety from UDP-GlcNAc onto the carrier lipid undecaprenyl phosphate (C55-P), yielding GlcNAc-pyrophosphoryl-undecaprenyl (GlcNAc-PP-C55). The polypeptide is Undecaprenyl-phosphate alpha-N-acetylglucosaminyl 1-phosphate transferase (Yersinia pestis).